Here is a 436-residue protein sequence, read N- to C-terminus: Adenylosuccinate synthetase (436 aa).

Residues 12–18 and 40–42 contribute to the GTP site; these read GDEGKGK and GHT. Asp13 functions as the Proton acceptor in the catalytic mechanism. Residues Asp13 and Gly40 each coordinate Mg(2+). Residues 13 to 16, 38 to 41, Thr128, Arg142, Gln223, Thr238, and Arg302 contribute to the IMP site; these read DEGK and NAGH. His41 (proton donor) is an active-site residue. Position 298-304 (298-304) interacts with substrate; it reads TTTGRRR. GTP contacts are provided by residues Arg304, 330–332, and 412–414; these read KLD and SLG.

Belongs to the adenylosuccinate synthetase family. In terms of assembly, homodimer. Requires Mg(2+) as cofactor.

The protein resides in the cytoplasm. It catalyses the reaction IMP + L-aspartate + GTP = N(6)-(1,2-dicarboxyethyl)-AMP + GDP + phosphate + 2 H(+). The protein operates within purine metabolism; AMP biosynthesis via de novo pathway; AMP from IMP: step 1/2. In terms of biological role, plays an important role in the de novo pathway of purine nucleotide biosynthesis. Catalyzes the first committed step in the biosynthesis of AMP from IMP. This chain is Adenylosuccinate synthetase, found in Prochlorococcus marinus (strain MIT 9515).